The chain runs to 188 residues: Pyridoxal 5'-phosphate synthase subunit PdxT (188 aa).

47–49 (GES) is an L-glutamine binding site. Cys79 serves as the catalytic Nucleophile. L-glutamine is bound by residues Arg106 and 134 to 135 (IR). Residues His169 and Glu171 each act as charge relay system in the active site.

The protein belongs to the glutaminase PdxT/SNO family. In terms of assembly, in the presence of PdxS, forms a dodecamer of heterodimers. Only shows activity in the heterodimer.

It carries out the reaction aldehydo-D-ribose 5-phosphate + D-glyceraldehyde 3-phosphate + L-glutamine = pyridoxal 5'-phosphate + L-glutamate + phosphate + 3 H2O + H(+). It catalyses the reaction L-glutamine + H2O = L-glutamate + NH4(+). It participates in cofactor biosynthesis; pyridoxal 5'-phosphate biosynthesis. Its function is as follows. Catalyzes the hydrolysis of glutamine to glutamate and ammonia as part of the biosynthesis of pyridoxal 5'-phosphate. The resulting ammonia molecule is channeled to the active site of PdxS. In Caldicellulosiruptor bescii (strain ATCC BAA-1888 / DSM 6725 / KCTC 15123 / Z-1320) (Anaerocellum thermophilum), this protein is Pyridoxal 5'-phosphate synthase subunit PdxT.